Consider the following 243-residue polypeptide: NAD(P)H-quinone oxidoreductase subunit K (243 aa).

[4Fe-4S] cluster is bound by residues C59, C60, C124, and C155.

Belongs to the complex I 20 kDa subunit family. As to quaternary structure, NDH-1 can be composed of about 15 different subunits; different subcomplexes with different compositions have been identified which probably have different functions. It depends on [4Fe-4S] cluster as a cofactor.

It is found in the cellular thylakoid membrane. The enzyme catalyses a plastoquinone + NADH + (n+1) H(+)(in) = a plastoquinol + NAD(+) + n H(+)(out). The catalysed reaction is a plastoquinone + NADPH + (n+1) H(+)(in) = a plastoquinol + NADP(+) + n H(+)(out). NDH-1 shuttles electrons from an unknown electron donor, via FMN and iron-sulfur (Fe-S) centers, to quinones in the respiratory and/or the photosynthetic chain. The immediate electron acceptor for the enzyme in this species is believed to be plastoquinone. Couples the redox reaction to proton translocation, and thus conserves the redox energy in a proton gradient. Cyanobacterial NDH-1 also plays a role in inorganic carbon-concentration. In Picosynechococcus sp. (strain ATCC 27264 / PCC 7002 / PR-6) (Agmenellum quadruplicatum), this protein is NAD(P)H-quinone oxidoreductase subunit K.